The following is a 105-amino-acid chain: uncharacterized protein (105 aa).

The disordered stretch occupies residues threonine 80–aspartate 105.

This is an uncharacterized protein from Micromonospora rosea.